The sequence spans 1516 residues: MAPAKATNVVRLLLGSTALWLSQLGSGTVAASKSVTAHLAAKWPETPLLLEASEFMAEESNEKFWQFLETVQELAIYKQTESDYSYYNLILKKAGQFLDNLHINLLKFAFSIRAYSPAIQMFQQIAADEPPPDGCNAFVVIHKKHTCKINEIKKLLKKAASRTRPYLFKGDHKFPTNKENLPVVILYAEMGTRTFSAFHKVLSEKAQNEEILYVLRHYIQKPSSRKMYLSGYGVELAIKSTEYKALDDTQVKTVTNTTVEDETETNEVQGFLFGKLKEIYSDLRDNLTAFQKYLIESNKQMMPLKVWELQDLSFQAASQIMSAPVYDSIKLMKDISQNFPIKARSLTRIAVNQHMREEIKENQKDLQVRFKIQPGDARLFINGLRVDMDVYDAFSILDMLKLEGKMMNGLRNLGINGEDMSKFLKLNSHIWEYTYVLDIRHSSIMWINDLENDDLYITWPTSCQKLLKPVFPGSVPSIRRNFHNLVLFIDPAQEYTLDFIKLADVFYSHEVPLRIGFVFILNTDDEVDGANDAGVALWRAFNYIAEEFDISEAFISIVHMYQKVKKDQNILTVDNVKSVLQNTFPHANIWDILGIHSKYDEERKAGASFYKMTGLGPLPQALYNGEPFKHEEMNIKELKMAVLQRMMDASVYLQREVFLGTLNDRTNAIDFLMDRNNVVPRINTLILRTNQQYLNLISTSVTADVEDFSTFFFLDSQDKSAVIAKNMYYLTQDDESIISAVTLWIIADFDKPSGRKLLFNALKHMKTSVHSRLGIIYNPTSKINEENTAISRGILAAFLTQKNMFLRSFLGQLAKEEIATAIYSGDKIKTFLIEGMDKNAFEKKYNTVGVNIFRTHQLFCQDVLKLRPGEMGIVSNGRFLGPLDEDFYAEDFYLLEKITFSNLGEKIKGIVENMGINANNMSDFIMKVDALMSSVPKRASRYDVTFLRENHSVIKTNPQENDMFFNVIAIVDPLTREAQKMAQLLVVLGKIINMKIKLFMNCRGRLSEAPLESFYRFVLEPELMSGANDVSSLGPVAKFLDIPESPLLILNMITPEGWLVETVHSNCDLDNIHLKDTEKTVTAEYELEYLLLEGQCFDKVTEQPPRGLQFTLGTKNKPAVVDTIVMAHHGYFQLKANPGAWILRLHQGKSEDIYQIVGHEGTDSQADLEDIIVVLNSFKSKILKVKVKKETDKIKEDILTDEDEKTKGLWDSIKSFTVSLHKENKKEKDVLNIFSVASGHLYERFLRIMMLSVLRNTKTPVKFWLLKNYLSPTFKEVIPHMAKEYGFRYELVQYRWPRWLRQQTERQRIIWGYKILFLDVLFPLAVDKIIFVDADQIVRHDLKELRDFDLDGAPYGYTPFCDSRREMDGYRFWKTGYWASHLLRRKYHISALYVVDLKKFRRIGAGDRLRSQYQALSQDPNSLSNLDQDLPNNMIYQVAIKSLPQDWLWCETWCDDESKQRAKTIDLCNNPKTKESKLKAAARIVPEWVEYDAEIRQLLDHLENKKQDTILTHDEL.

The signal sequence occupies residues 1 to 27 (MAPAKATNVVRLLLGSTALWLSQLGSG). 4 N-linked (GlcNAc...) asparagine glycosylation sites follow: asparagine 256, asparagine 286, asparagine 920, and asparagine 950. Positions 1220 to 1516 (LHKENKKEKD…QDTILTHDEL (297 aa)) are glucosyltransferase. At tyrosine 1289 the chain carries Phosphotyrosine. The Prevents secretion from ER motif lies at 1513–1516 (HDEL).

Belongs to the glycosyltransferase 8 family. Interacts with METTL23. Interacts with SELENOF. Ca(2+) is required as a cofactor. It depends on Mn(2+) as a cofactor. In terms of tissue distribution, higher levels in kidney, pancreas, heart, and skeletal muscle.

The protein localises to the endoplasmic reticulum lumen. The protein resides in the endoplasmic reticulum-Golgi intermediate compartment. It carries out the reaction N(4)-(alpha-D-Man-(1-&gt;2)-alpha-D-Man-(1-&gt;2)-alpha-D-Man-(1-&gt;3)-[alpha-D-Man-(1-&gt;2)-alpha-D-Man-(1-&gt;3)-[alpha-D-Man-(1-&gt;2)-alpha-D-Man-(1-&gt;6)]-alpha-D-Man-(1-&gt;6)]-beta-D-Man-(1-&gt;4)-beta-D-GlcNAc-(1-&gt;4)-beta-D-GlcNAc)-L-asparaginyl-[protein] (N-glucan mannose isomer 9A1,2,3B1,2,3) + UDP-alpha-D-glucose = N(4)-(alpha-D-Glc-(1-&gt;3)-alpha-D-Man-(1-&gt;2)-alpha-D-Man-(1-&gt;2)-alpha-D-Man-(1-&gt;3)-[alpha-D-Man-(1-&gt;2)-alpha-D-Man-(1-&gt;3)-[alpha-D-Man-(1-&gt;2)-alpha-D-Man-(1-&gt;6)]-alpha-D-Man-(1-&gt;6)]-beta-D-Man-(1-&gt;4)-beta-D-GlcNAc-(1-&gt;4)-beta-D-GlcNAc)-L-asparaginyl-[protein] + UDP + H(+). It participates in protein modification; protein glycosylation. With respect to regulation, ethylenediaminetetraacetic acid completely abolishes catalytic activity. Catalytic activity is enhanced by complex formation with SELENOF. Functionally, recognizes glycoproteins with minor folding defects. Reglucosylates single N-glycans near the misfolded part of the protein, thus providing quality control for protein folding in the endoplasmic reticulum. Reglucosylated proteins are recognized by calreticulin for recycling to the endoplasmic reticulum and refolding or degradation. This is UDP-glucose:glycoprotein glucosyltransferase 2 (UGGT2) from Homo sapiens (Human).